Here is a 617-residue protein sequence, read N- to C-terminus: Phosphatidylinositol-3,5-bisphosphate 3-phosphatase MTMR6 (617 aa).

In terms of domain architecture, GRAM spans 1-101 (MEHIRTTKVE…YNSLLQLSKQ (101 aa)). The segment at 2-141 (EHIRTTKVEQ…AEYERMGVPN (140 aa)) is interaction with RAB1B. Tyr108 carries the phosphotyrosine modification. In terms of domain architecture, Myotubularin phosphatase spans 124–499 (GWQLIDLAAE…FNFKFWRNMY (376 aa)). Asn248, Asn273, and Ile274 together coordinate a 1,2-diacyl-sn-glycero-3-phospho-(1D-myo-inositol-3,5-bisphosphate). The a 1,2-diacyl-sn-glycero-3-phospho-(1D-myo-inositol-3-phosphate) site is built by Asn248, Asn273, and Ile274. Cys336 (phosphocysteine intermediate) is an active-site residue. Ser337, Asp338, Gly339, Trp340, Asp341, Arg342, Lys378, and Arg382 together coordinate a 1,2-diacyl-sn-glycero-3-phospho-(1D-myo-inositol-3,5-bisphosphate). A 1,2-diacyl-sn-glycero-3-phospho-(1D-myo-inositol-3-phosphate)-binding residues include Ser337, Asp338, Gly339, Trp340, Asp341, and Arg342. Residue Arg382 participates in a 1,2-diacyl-sn-glycero-3-phospho-(1D-myo-inositol-3-phosphate) binding. Residues Ser557, Ser585, and Ser607 each carry the phosphoserine modification.

Belongs to the protein-tyrosine phosphatase family. Non-receptor class myotubularin subfamily. Homodimer. Heterodimer (via C-terminus) with MTMR9 (via C-terminus). Interacts with ALKBH4. Interacts with KCNN4. Interacts (via GRAM domain) with RAB1B (in GDP-bound form); the interaction regulates MTMR6 recruitment to the endoplasmic reticulum-Golgi intermediate compartment. In terms of tissue distribution, isoform 1: Ubiquitously expressed including in heart, brain, spleen, lung, liver, muscle, kidney and testis (at protein level). Isoform 2: Expressed in testis (at protein level).

The protein resides in the cytoplasm. It localises to the endoplasmic reticulum-Golgi intermediate compartment. Its subcellular location is the cell projection. It is found in the ruffle membrane. The protein localises to the endoplasmic reticulum. The enzyme catalyses a 1,2-diacyl-sn-glycero-3-phospho-(1D-myo-inositol-3,5-bisphosphate) + H2O = a 1,2-diacyl-sn-glycero-3-phospho-(1D-myo-inositol-5-phosphate) + phosphate. It catalyses the reaction a 1,2-diacyl-sn-glycero-3-phospho-(1D-myo-inositol-3-phosphate) + H2O = a 1,2-diacyl-sn-glycero-3-phospho-(1D-myo-inositol) + phosphate. It carries out the reaction 1,2-dioctanoyl-sn-glycero-3-phospho-(1D-myo-inositol-3,5-bisphosphate) + H2O = 1,2-dioctanoyl-sn-glycero-3-phospho-(1D-myo-inositol-5-phosphate) + phosphate. The catalysed reaction is 1,2-dioctanoyl-sn-glycero-3-phospho-(1-D-myo-inositol-3-phosphate) + H2O = 1,2-dioctanoyl-sn-glycero-3-phospho-(1D-myo-inositol) + phosphate. Its activity is regulated as follows. Allosterically activated by phosphatidylserine and/or phosphatidylinositol 4-phosphate (PtdIns(4)P), and phosphatidylinositol 5-phosphate (PtdIns(5)P). Interaction with MTMR9 increases catalytic activity towards phosphatidylinositol 3,5-bisphosphate. Lipid phosphatase that specifically dephosphorylates the D-3 position of phosphatidylinositol 3-phosphate and phosphatidylinositol 3,5-bisphosphate, generating phosphatidylinositol and phosphatidylinositol 5-phosphate. Binds with high affinity to phosphatidylinositol 3,5-bisphosphate (PtdIns(3,5)P2) but also to phosphatidylinositol 3-phosphate (PtdIns(3)P), phosphatidylinositol 4-phosphate (PtdIns(4)P), and phosphatidylinositol 5-phosphate (PtdIns(5)P), phosphatidic acid and phosphatidylserine. Negatively regulates ER-Golgi protein transport. Probably in association with MTMR9, plays a role in the late stages of macropinocytosis by dephosphorylating phosphatidylinositol 3-phosphate in membrane ruffles. Acts as a negative regulator of KCNN4/KCa3.1 channel activity in CD4(+) T-cells possibly by decreasing intracellular levels of phosphatidylinositol 3-phosphate. Negatively regulates proliferation of reactivated CD4(+) T-cells. In complex with MTMR9, negatively regulates DNA damage-induced apoptosis. The formation of the MTMR6-MTMR9 complex stabilizes both MTMR6 and MTMR9 protein levels. The protein is Phosphatidylinositol-3,5-bisphosphate 3-phosphatase MTMR6 of Mus musculus (Mouse).